The sequence spans 454 residues: Argininosuccinate synthase (454 aa).

ATP-binding positions include 17 to 25 (AFSGGLDTS) and Ala43. Residue Tyr99 coordinates L-citrulline. ATP is bound by residues Gly129 and Thr131. 3 residues coordinate L-aspartate: Thr131, Asn135, and Asp136. Residue Asn135 participates in L-citrulline binding. Asp136 contributes to the ATP binding site. Residues Arg139 and Ser192 each contribute to the L-citrulline site. Residue Asp194 coordinates ATP. Residues Thr201, Glu203, and Glu280 each coordinate L-citrulline.

This sequence belongs to the argininosuccinate synthase family. Type 2 subfamily. As to quaternary structure, homotetramer.

Its subcellular location is the cytoplasm. It catalyses the reaction L-citrulline + L-aspartate + ATP = 2-(N(omega)-L-arginino)succinate + AMP + diphosphate + H(+). It functions in the pathway amino-acid biosynthesis; L-arginine biosynthesis; L-arginine from L-ornithine and carbamoyl phosphate: step 2/3. The protein is Argininosuccinate synthase of Yersinia enterocolitica serotype O:8 / biotype 1B (strain NCTC 13174 / 8081).